Consider the following 241-residue polypeptide: ATP synthase subunit a (241 aa).

Transmembrane regions (helical) follow at residues 29 to 49, 54 to 74, 86 to 106, 114 to 134, 153 to 173, 177 to 197, 200 to 220, and 221 to 241; these read NSSL…LFGI, VIPG…ISII, IPLI…GVLP, HVIV…IVGF, WLAP…PVSL, LAAN…FIVN, IFFT…EVFV, and AILQ…DAVK.

Belongs to the ATPase A chain family. As to quaternary structure, F-type ATPases have 2 components, CF(1) - the catalytic core - and CF(0) - the membrane proton channel. CF(1) has five subunits: alpha(3), beta(3), gamma(1), delta(1), epsilon(1). CF(0) has three main subunits: a(1), b(2) and c(9-12). The alpha and beta chains form an alternating ring which encloses part of the gamma chain. CF(1) is attached to CF(0) by a central stalk formed by the gamma and epsilon chains, while a peripheral stalk is formed by the delta and b chains.

It localises to the cell inner membrane. Its function is as follows. Key component of the proton channel; it plays a direct role in the translocation of protons across the membrane. The polypeptide is ATP synthase subunit a (Wolbachia sp. subsp. Drosophila simulans (strain wRi)).